The following is a 222-amino-acid chain: Probable transaldolase 2 (222 aa).

K90 serves as the catalytic Schiff-base intermediate with substrate.

It belongs to the transaldolase family. Type 3B subfamily.

The protein localises to the cytoplasm. It catalyses the reaction D-sedoheptulose 7-phosphate + D-glyceraldehyde 3-phosphate = D-erythrose 4-phosphate + beta-D-fructose 6-phosphate. It functions in the pathway carbohydrate degradation; pentose phosphate pathway; D-glyceraldehyde 3-phosphate and beta-D-fructose 6-phosphate from D-ribose 5-phosphate and D-xylulose 5-phosphate (non-oxidative stage): step 2/3. Functionally, transaldolase is important for the balance of metabolites in the pentose-phosphate pathway. The polypeptide is Probable transaldolase 2 (Bacillus cereus (strain ATCC 14579 / DSM 31 / CCUG 7414 / JCM 2152 / NBRC 15305 / NCIMB 9373 / NCTC 2599 / NRRL B-3711)).